The following is a 213-amino-acid chain: FMN-dependent NADH:quinone oxidoreductase (213 aa).

Position 10 (S10) interacts with FMN.

It belongs to the azoreductase type 1 family. As to quaternary structure, homodimer. FMN serves as cofactor.

It carries out the reaction 2 a quinone + NADH + H(+) = 2 a 1,4-benzosemiquinone + NAD(+). It catalyses the reaction N,N-dimethyl-1,4-phenylenediamine + anthranilate + 2 NAD(+) = 2-(4-dimethylaminophenyl)diazenylbenzoate + 2 NADH + 2 H(+). Functionally, quinone reductase that provides resistance to thiol-specific stress caused by electrophilic quinones. In terms of biological role, also exhibits azoreductase activity. Catalyzes the reductive cleavage of the azo bond in aromatic azo compounds to the corresponding amines. The sequence is that of FMN-dependent NADH:quinone oxidoreductase from Opitutus terrae (strain DSM 11246 / JCM 15787 / PB90-1).